Here is a 374-residue protein sequence, read N- to C-terminus: Acid phosphatase-like protein XcAP-1 (374 aa).

Residues 1 to 17 (TTIILLIAFAAIQLSKA) form the signal peptide. Val-25 contacts serotonin. 3 disulfides stabilise this stretch: Cys-144–Cys-372, Cys-165–Cys-219, and Cys-345–Cys-349. 4 residues coordinate serotonin: Asp-245, Asp-249, Asn-271, and Gln-283.

This sequence belongs to the histidine acid phosphatase family.

The protein resides in the secreted. Functionally, probably modulates blood feeding of fleas on vertebrate species by binding and sequestering different mediators involved in the host response. Binds biogenic amines: serotonin, adrenaline and noradrenaline. Binds leukotriene C4. Does not bind histamine, leukotriene B4, leukotriene D4, leukotriene E4, ADP, and stable analogs of thromboxane A2: U-46619 and cTXA2. The chain is Acid phosphatase-like protein XcAP-1 from Xenopsylla cheopis (Oriental rat flea).